The sequence spans 470 residues: D-serine/D-alanine/glycine transporter (470 aa).

12 helical membrane passes run 30–50 (LIAI…KTIS), 51–71 (LAGP…FFVM), 102–122 (FTGW…VVAI), 137–157 (VASL…VKMF), 162–182 (FWFA…GLVM), 211–231 (LSGF…IELV), 256–276 (IIMF…WSSV), 283–303 (FVEL…NFVV), 350–370 (FSCI…SVIG), 371–391 (AFTM…TIIL), 413–433 (PLGK…VVLL), and 441–461 (QALL…LFIG).

This sequence belongs to the amino acid-polyamine-organocation (APC) superfamily. Amino acid transporter (AAT) (TC 2.A.3.1) family.

Its subcellular location is the cell inner membrane. It catalyses the reaction D-alanine(in) + H(+)(in) = D-alanine(out) + H(+)(out). The enzyme catalyses D-serine(out) + H(+)(out) = D-serine(in) + H(+)(in). The catalysed reaction is glycine(in) + H(+)(in) = glycine(out) + H(+)(out). Its function is as follows. Permease that is involved in the transport across the cytoplasmic membrane of D-alanine, D-serine and glycine. The protein is D-serine/D-alanine/glycine transporter (cycA) of Escherichia coli O157:H7.